Consider the following 404-residue polypeptide: SAC3 domain-containing protein 1 (404 aa).

Disordered stretches follow at residues 1 to 58 (MAGR…GTCP) and 77 to 117 (RLEV…QLRP). Over residues 12 to 21 (PPRPAAPHPR) the composition is skewed to pro residues. The span at 87-101 (DPPRADPQRAVKEYS) shows a compositional bias: basic and acidic residues. Positions 203-379 (QVQEGFGSLR…TCKVLVESKL (177 aa)) constitute a PCI domain. S402 carries the post-translational modification Phosphoserine.

This sequence belongs to the SAC3 family. As to quaternary structure, may be part of a SEM1-containing complex.

Its subcellular location is the cytoplasm. The protein localises to the cytoskeleton. It is found in the microtubule organizing center. It localises to the centrosome. The protein resides in the spindle. Functionally, involved in centrosome duplication and mitotic progression. The sequence is that of SAC3 domain-containing protein 1 (SAC3D1) from Homo sapiens (Human).